Here is a 270-residue protein sequence, read N- to C-terminus: Lipopolysaccharide core biosynthesis glycosyltransferase LpsC (270 aa).

This sequence belongs to the glycosyltransferase 2 family. WaaE/KdtX subfamily.

Its pathway is bacterial outer membrane biogenesis; LPS core biosynthesis. This Rhizobium meliloti (strain 1021) (Ensifer meliloti) protein is Lipopolysaccharide core biosynthesis glycosyltransferase LpsC (lpsC).